We begin with the raw amino-acid sequence, 67 residues long: Large ribosomal subunit protein bL31 (67 aa).

C16, C18, C36, and C39 together coordinate Zn(2+).

The protein belongs to the bacterial ribosomal protein bL31 family. Type A subfamily. As to quaternary structure, part of the 50S ribosomal subunit. The cofactor is Zn(2+).

Its function is as follows. Binds the 23S rRNA. This chain is Large ribosomal subunit protein bL31, found in Aliarcobacter butzleri (strain RM4018) (Arcobacter butzleri).